We begin with the raw amino-acid sequence, 341 residues long: Glyceraldehyde-3-phosphate dehydrogenase 3 (341 aa).

Residues 13 to 14 (RI), Asp-35, and Arg-85 contribute to the NAD(+) site. D-glyceraldehyde 3-phosphate is bound by residues 157–159 (SCT), Thr-188, 217–218 (TG), and Arg-240. The active-site Nucleophile is Cys-158. Position 322 (Asn-322) interacts with NAD(+).

The protein belongs to the glyceraldehyde-3-phosphate dehydrogenase family. In terms of assembly, homotetramer.

It localises to the cytoplasm. The enzyme catalyses D-glyceraldehyde 3-phosphate + phosphate + NAD(+) = (2R)-3-phospho-glyceroyl phosphate + NADH + H(+). It participates in carbohydrate degradation; glycolysis; pyruvate from D-glyceraldehyde 3-phosphate: step 1/5. This is Glyceraldehyde-3-phosphate dehydrogenase 3 (gpd-3) from Caenorhabditis elegans.